A 549-amino-acid polypeptide reads, in one-letter code: Glutamyl-tRNA(Gln) amidotransferase subunit B, mitochondrial (549 aa).

Residues 1–23 (MLRISRDTKIVARVTHVTKSRTY) constitute a mitochondrion transit peptide.

It belongs to the GatB/GatE family. GatB subfamily. Subunit of the heterotrimeric GatFAB amidotransferase (AdT) complex, composed of A, B and F subunits.

The protein resides in the mitochondrion. The enzyme catalyses L-glutamyl-tRNA(Gln) + L-glutamine + ATP + H2O = L-glutaminyl-tRNA(Gln) + L-glutamate + ADP + phosphate + H(+). Its function is as follows. Allows the formation of correctly charged Gln-tRNA(Gln) through the transamidation of misacylated Glu-tRNA(Gln) in the mitochondria. The reaction takes place in the presence of glutamine and ATP through an activated gamma-phospho-Glu-tRNA(Gln). In Yarrowia lipolytica (strain CLIB 122 / E 150) (Yeast), this protein is Glutamyl-tRNA(Gln) amidotransferase subunit B, mitochondrial.